Here is a 338-residue protein sequence, read N- to C-terminus: MPSPIRVAILGATGAVGTELLELLASRNFPLAELKLLASPRSAGKTLEFQGEKLPIQAVDGSAFKGCDLVLASAGGSTSKRWAEEITKAGAVMVDNSSAFRMVPEVPLVVPEINPEAAQNHQGIIANPNCTTILMGVAIYPLHQLQPIKRIVVATYQSASGAGAMAMEEVKHQSRDILEGKIPQAEILPYPLAFNLFPHNSPITANHYCEEEMKMVQETRKIFAAEDIRITATCVRVPVLRAHSEAVNLEFATPFPVELAKTAIAKAPGVKLVEDWQKNYFPMPMDATGQDDVLVGRIRQDISHPNGLDLWLCGDQIRKGAALNAVQIAELLVERGWL.

Residues 13-16 (TGAV) and 41-42 (RS) each bind NADP(+). Arg-101 contacts phosphate. Residue Cys-130 is the Acyl-thioester intermediate of the active site. Residue Gln-157 participates in substrate binding. 160 to 161 (SG) lines the NADP(+) pocket. Lys-214 contacts phosphate. Position 236 (Arg-236) interacts with substrate. The Proton acceptor role is filled by His-243. An NADP(+)-binding site is contributed by Gln-316.

It belongs to the aspartate-semialdehyde dehydrogenase family. In terms of assembly, homodimer.

The enzyme catalyses L-aspartate 4-semialdehyde + phosphate + NADP(+) = 4-phospho-L-aspartate + NADPH + H(+). Its pathway is amino-acid biosynthesis; L-lysine biosynthesis via DAP pathway; (S)-tetrahydrodipicolinate from L-aspartate: step 2/4. The protein operates within amino-acid biosynthesis; L-methionine biosynthesis via de novo pathway; L-homoserine from L-aspartate: step 2/3. It participates in amino-acid biosynthesis; L-threonine biosynthesis; L-threonine from L-aspartate: step 2/5. In terms of biological role, catalyzes the NADPH-dependent formation of L-aspartate-semialdehyde (L-ASA) by the reductive dephosphorylation of L-aspartyl-4-phosphate. The sequence is that of Aspartate-semialdehyde dehydrogenase (asd) from Synechocystis sp. (strain ATCC 27184 / PCC 6803 / Kazusa).